Consider the following 108-residue polypeptide: uncharacterized protein (108 aa).

A helical transmembrane segment spans residues 25-45; sequence VILKSFLLISSWVILVLLLVI.

It localises to the membrane. This is an uncharacterized protein from Saccharomyces cerevisiae (strain ATCC 204508 / S288c) (Baker's yeast).